The chain runs to 221 residues: Adenylate kinase (221 aa).

Gly-10–Thr-15 provides a ligand contact to ATP. An NMP region spans residues Ser-30–Val-59. AMP contacts are provided by residues Thr-31, Arg-36, Glu-57–Val-59, Gly-85–Arg-88, and Gln-92. The LID stretch occupies residues Gly-122–Asp-159. Residues Arg-123 and Thr-132–Tyr-133 contribute to the ATP site. AMP contacts are provided by Arg-156 and Arg-167. Position 207 (Gly-207) interacts with ATP.

This sequence belongs to the adenylate kinase family. In terms of assembly, monomer.

Its subcellular location is the cytoplasm. The enzyme catalyses AMP + ATP = 2 ADP. The protein operates within purine metabolism; AMP biosynthesis via salvage pathway; AMP from ADP: step 1/1. Catalyzes the reversible transfer of the terminal phosphate group between ATP and AMP. Plays an important role in cellular energy homeostasis and in adenine nucleotide metabolism. This Paraburkholderia phymatum (strain DSM 17167 / CIP 108236 / LMG 21445 / STM815) (Burkholderia phymatum) protein is Adenylate kinase.